The sequence spans 418 residues: Queuine tRNA-ribosyltransferase accessory subunit 2 (418 aa).

Zn(2+)-binding residues include Cys-325, Cys-327, Cys-330, and His-356.

This sequence belongs to the queuine tRNA-ribosyltransferase family. QTRT2 subfamily. Heterodimer of a catalytic subunit and an accessory subunit. Zn(2+) serves as cofactor.

The protein localises to the cytoplasm. Functionally, non-catalytic subunit of the queuine tRNA-ribosyltransferase (TGT) that catalyzes the base-exchange of a guanine (G) residue with queuine (Q) at position 34 (anticodon wobble position) in tRNAs with GU(N) anticodons (tRNA-Asp, -Asn, -His and -Tyr), resulting in the hypermodified nucleoside queuosine (7-(((4,5-cis-dihydroxy-2-cyclopenten-1-yl)amino)methyl)-7-deazaguanosine). The protein is Queuine tRNA-ribosyltransferase accessory subunit 2 of Drosophila yakuba (Fruit fly).